Reading from the N-terminus, the 161-residue chain is RuBisCO chaperone RbcX (161 aa).

2 disordered regions span residues 1 to 20 (MQFMGTASRMASTQRAKPME) and 130 to 161 (LGAEPSLPETEVSDRPSDSATPDDASNASHAD). Residues 147 to 161 (DSATPDDASNASHAD) are compositionally biased toward polar residues.

It belongs to the RbcX family. As to quaternary structure, homodimer. Interacts with the exposed C-terminal peptide of endogenous RbcL ('Lys-460-Asp-470') via its central cleft, as well as C-terminal peptides from other cyanobacterial RbcL. Contacts a second RbcL monomer via its peripheral polar surface.

The protein localises to the carboxysome. The protein resides in the cytoplasm. An RbcL-specific chaperone. The central cleft of the RbcX homodimer (RbcX2) binds the C-terminus of an RbcL monomer, stabilizing the C-terminus and probably preventing its reassociation with chaperonin GroEL-ES. At the same time the peripheral region of RbcX2 binds a second RbcL monomer, bridging the RbcL homodimers in the correct orientation. The RbcX2(2)-bound RbcL dimers then assemble into the RbcL8 core (RbcL8-(RbcX2)8). RbcS binding triggers the release of RbcX2. The sequence is that of RuBisCO chaperone RbcX from Synechococcus sp. (strain ATCC 27144 / PCC 6301 / SAUG 1402/1) (Anacystis nidulans).